Reading from the N-terminus, the 478-residue chain is Sulfate adenylyltransferase subunit 1 (478 aa).

The 217-residue stretch at 24-240 (KSLLRFLTCG…VLENVDIDAD (217 aa)) folds into the tr-type G domain. Residues 33–40 (GSVDDGKS) form a G1 region. Position 33–40 (33–40 (GSVDDGKS)) interacts with GTP. Positions 91–95 (GITID) are G2. The G3 stretch occupies residues 112–115 (DTPG). Residues 112 to 116 (DTPGH) and 167 to 170 (NKMD) each bind GTP. The segment at 167 to 170 (NKMD) is G4. Positions 206–208 (SAL) are G5.

The protein belongs to the TRAFAC class translation factor GTPase superfamily. Classic translation factor GTPase family. CysN/NodQ subfamily. As to quaternary structure, heterodimer composed of CysD, the smaller subunit, and CysN.

It catalyses the reaction sulfate + ATP + H(+) = adenosine 5'-phosphosulfate + diphosphate. The protein operates within sulfur metabolism; hydrogen sulfide biosynthesis; sulfite from sulfate: step 1/3. With CysD forms the ATP sulfurylase (ATPS) that catalyzes the adenylation of sulfate producing adenosine 5'-phosphosulfate (APS) and diphosphate, the first enzymatic step in sulfur assimilation pathway. APS synthesis involves the formation of a high-energy phosphoric-sulfuric acid anhydride bond driven by GTP hydrolysis by CysN coupled to ATP hydrolysis by CysD. The protein is Sulfate adenylyltransferase subunit 1 of Aliivibrio fischeri (strain ATCC 700601 / ES114) (Vibrio fischeri).